We begin with the raw amino-acid sequence, 439 residues long: Glucose-6-phosphate 1-dehydrogenase (439 aa).

Lys-100 serves as a coordination point for NADP(+). Positions 130, 134, 168, and 187 each coordinate substrate. Catalysis depends on His-192, which acts as the Proton acceptor. Lys-288 contributes to the substrate binding site.

This sequence belongs to the glucose-6-phosphate dehydrogenase family.

The catalysed reaction is D-glucose 6-phosphate + NADP(+) = 6-phospho-D-glucono-1,5-lactone + NADPH + H(+). It functions in the pathway carbohydrate degradation; pentose phosphate pathway; D-ribulose 5-phosphate from D-glucose 6-phosphate (oxidative stage): step 1/3. Functionally, catalyzes the oxidation of glucose 6-phosphate to 6-phosphogluconolactone. The protein is Glucose-6-phosphate 1-dehydrogenase of Chlamydia trachomatis serovar D (strain ATCC VR-885 / DSM 19411 / UW-3/Cx).